Here is a 118-residue protein sequence, read N- to C-terminus: Small ribosomal subunit protein uS13 (118 aa).

The disordered stretch occupies residues 94–118 (GLPLRGQRTRTNARTRKGPRKAIRK).

The protein belongs to the universal ribosomal protein uS13 family. In terms of assembly, part of the 30S ribosomal subunit. Forms a loose heterodimer with protein S19. Forms two bridges to the 50S subunit in the 70S ribosome.

In terms of biological role, located at the top of the head of the 30S subunit, it contacts several helices of the 16S rRNA. In the 70S ribosome it contacts the 23S rRNA (bridge B1a) and protein L5 of the 50S subunit (bridge B1b), connecting the 2 subunits; these bridges are implicated in subunit movement. Contacts the tRNAs in the A and P-sites. This Stenotrophomonas maltophilia (strain R551-3) protein is Small ribosomal subunit protein uS13.